Consider the following 413-residue polypeptide: Alpha-ketoglutarate-dependent xanthine dioxygenase xan1 (413 aa).

Positions 1-18 (MSATATTTVVEPPTTTLT) are enriched in low complexity. The interval 1-24 (MSATATTTVVEPPTTTLTGATEPP) is disordered. Positions 183 and 185 each coordinate Fe cation. 2 residues coordinate 2-oxoglutarate: T228 and W362. H377 provides a ligand contact to Fe cation. Residue R389 coordinates 2-oxoglutarate.

Belongs to the TfdA dioxygenase family. Requires Fe(2+) as cofactor.

The protein resides in the cytoplasm. The protein localises to the cytosol. It catalyses the reaction xanthine + 2-oxoglutarate + O2 = urate + succinate + CO2. Its function is as follows. Alpha-ketoglutarate-dependent xanthine dioxygenase is a non-heme mononuclear Fe(2+) enzyme that decarboxylates alpha-ketoglutarate to succinate and CO(2) while hydroxylating xanthine to generate uric acid. Allows xanthine utilization as a nitrogen source. The polypeptide is Alpha-ketoglutarate-dependent xanthine dioxygenase xan1 (xan1) (Schizosaccharomyces pombe (strain 972 / ATCC 24843) (Fission yeast)).